A 130-amino-acid chain; its full sequence is MSLMDPLANALNHVSNCESVGKNVAYLKPASKLIGRVLNVMQDQGYIGNFEYIEDGKAGVYKVDLIGQINKCGAVKPRYAVKNHDFEKFEKRYLPAKGFGLLIVSTPKGLMTHDEARNAGVGGRLISYIY.

It belongs to the universal ribosomal protein uS8 family. Part of the 30S ribosomal subunit.

Functionally, one of the primary rRNA binding proteins, it binds directly to 16S rRNA central domain where it helps coordinate assembly of the platform of the 30S subunit. This chain is Small ribosomal subunit protein uS8, found in Methanococcus maripaludis (strain C5 / ATCC BAA-1333).